The following is a 430-amino-acid chain: Adenylosuccinate synthetase (430 aa).

Residues Gly-17–Lys-23 and Gly-45–Thr-47 contribute to the GTP site. Asp-18 functions as the Proton acceptor in the catalytic mechanism. Residues Asp-18 and Gly-45 each coordinate Mg(2+). Residues Asp-18–Lys-21, Asn-43–His-46, Thr-139, Arg-153, Asn-229, Thr-244, and Arg-308 contribute to the IMP site. His-46 (proton donor) is an active-site residue. Substrate is bound at residue Thr-304–Arg-310. Residues Arg-310, Lys-336–Asp-338, and Gly-418–Gly-420 each bind GTP.

The protein belongs to the adenylosuccinate synthetase family. Homodimer. It depends on Mg(2+) as a cofactor.

The protein resides in the cytoplasm. It catalyses the reaction IMP + L-aspartate + GTP = N(6)-(1,2-dicarboxyethyl)-AMP + GDP + phosphate + 2 H(+). It functions in the pathway purine metabolism; AMP biosynthesis via de novo pathway; AMP from IMP: step 1/2. Functionally, plays an important role in the de novo pathway and in the salvage pathway of purine nucleotide biosynthesis. Catalyzes the first committed step in the biosynthesis of AMP from IMP. The chain is Adenylosuccinate synthetase from Cryptococcus neoformans var. neoformans serotype D (strain JEC21 / ATCC MYA-565) (Filobasidiella neoformans).